We begin with the raw amino-acid sequence, 300 residues long: uncharacterized protein (300 aa).

The next 10 helical transmembrane spans lie at 4-24 (IIIIMLFFLVSITWGTTWIAM), 31-51 (IPPFFATGIRFLAASPLLIIL), 68-88 (FQIFISIFYFSIPFTLMLYGG), 95-115 (ISSIIFANMPVLVLIISHFYL), 120-140 (NFIQKVGMVIALITLFFVLLI), 146-166 (CFFQWKGILALLLALLSHAVI), 177-197 (VSVITFNALPSLISGIFLSII), 214-234 (ILAVFYLGNFCGICGILSYFY), 242-262 (FYASIVFLIFPLIAGFLEIYI), and 272-292 (LWFIIPSGLGILLTLIPINFF). EamA domains lie at 15–139 (ITWG…FVLL) and 161–287 (LSHA…LTLI).

Belongs to the EamA transporter family.

It is found in the cell membrane. This is an uncharacterized protein from Buchnera aphidicola subsp. Schizaphis graminum (strain Sg).